The following is a 124-amino-acid chain: ATP synthase epsilon chain (124 aa).

Residues 99–118 show a composition bias toward basic and acidic residues; it reads LEQAKTEGDAHAERRADVRL. Residues 99–124 are disordered; the sequence is LEQAKTEGDAHAERRADVRLRAAAGR.

This sequence belongs to the ATPase epsilon chain family. As to quaternary structure, F-type ATPases have 2 components, CF(1) - the catalytic core - and CF(0) - the membrane proton channel. CF(1) has five subunits: alpha(3), beta(3), gamma(1), delta(1), epsilon(1). CF(0) has three main subunits: a, b and c.

The protein resides in the cell membrane. Produces ATP from ADP in the presence of a proton gradient across the membrane. In Streptomyces coelicolor (strain ATCC BAA-471 / A3(2) / M145), this protein is ATP synthase epsilon chain (atpC).